The sequence spans 408 residues: Putative ankyrin repeat protein L483 (408 aa).

ANK repeat units follow at residues 78-107, 108-137, 139-167, 168-197, 198-227, 229-257, 259-287, 288-317, 318-347, 349-377, and 378-407; these read SLNK…DIKA, GDDC…NIRA, NDYA…DIRA, NNDY…NIRT, ENDY…DIRA, NDYA…NIRV, NDYA…NIRA, RCDF…DIRS, QNDY…DIRT, DDYA…NIRA, and KDDY…VLTK.

This Acanthamoeba polyphaga (Amoeba) protein is Putative ankyrin repeat protein L483.